Reading from the N-terminus, the 376-residue chain is Dehydrogenase/reductase SDR family member FEY (376 aa).

S2 bears the N-acetylserine mark. An NAD(+)-binding site is contributed by 61 to 85 (VVTGSTSGIGRETARQLAEAGAHVV). S199 serves as a coordination point for substrate. Y227 (proton acceptor) is an active-site residue.

It belongs to the short-chain dehydrogenases/reductases (SDR) family. Expressed in roots, stems, leaves and flowers and, at lower levels, in siliques.

In terms of biological role, putative oxidoreductase. Required for vegetative shoot apex development, especially during leaf positioning and for shoot apical meristem (SAM) maintenance. The sequence is that of Dehydrogenase/reductase SDR family member FEY from Arabidopsis thaliana (Mouse-ear cress).